A 105-amino-acid polypeptide reads, in one-letter code: Synaptic plasticity regulator PANTS (105 aa).

It belongs to the UPF0545 family. Interacts with RTN4 isoform A/Nogo-A; the interaction results in enhanced RTN4-mediated inhibition of AMPA receptor clustering. Also interacts with NCAM1, RANBP2 and CCT8. In terms of processing, rapidly degraded by proteolysis following neuronal stimulation, resulting in increased AMPA receptor clustering.

The protein resides in the synapse. Its subcellular location is the synaptic cleft. Functionally, negatively regulates long-term potentiation and modulates adult synaptic plasticity. Stabilizes the interaction of RTN4 isoform A/Nogo-A with its receptors, inhibiting clustering of postsynaptic AMPA receptors at synaptic sites. Upon neuronal stimulation, degraded at synapses, reducing RTN4 signaling and allowing AMPA receptor clustering at individual synapses. This chain is Synaptic plasticity regulator PANTS, found in Pongo abelii (Sumatran orangutan).